The chain runs to 139 residues: SPbeta prophage-derived uncharacterized protein YomN (139 aa).

This is SPbeta prophage-derived uncharacterized protein YomN (yomN) from Bacillus subtilis (strain 168).